The primary structure comprises 69 residues: Large ribosomal subunit protein uL29 (69 aa).

Belongs to the universal ribosomal protein uL29 family.

The sequence is that of Large ribosomal subunit protein uL29 from Treponema denticola (strain ATCC 35405 / DSM 14222 / CIP 103919 / JCM 8153 / KCTC 15104).